An 898-amino-acid polypeptide reads, in one-letter code: Filament-like plant protein 7 (898 aa).

Coiled coils occupy residues 23 to 224 (EVVA…TAEA) and 287 to 320 (EKIN…LQFS). Disordered stretches follow at residues 429–482 (DNRP…DIKS), 693–723 (PGNQ…KLEE), and 777–835 (KSNN…GGNS). Low complexity predominate over residues 434 to 459 (SSPICSSDSISATGPVENESNENSSE). The span at 460 to 469 (ATKTSGTVYS) shows a compositional bias: polar residues. Positions 703–764 (VEEEANDKTA…KALTNSKETA (62 aa)) form a coiled coil. Residues 808–822 (MKAEDHNTGESKDQK) show a composition bias toward basic and acidic residues.

This sequence belongs to the FPP family. In terms of assembly, interacts with WPP/MAF proteins.

The polypeptide is Filament-like plant protein 7 (FPP7) (Arabidopsis thaliana (Mouse-ear cress)).